Reading from the N-terminus, the 152-residue chain is Protein SprT-like (152 aa).

In terms of domain architecture, SprT-like spans 6–151 (LQQLVCRISL…SKCLGKLELL (146 aa)). Zn(2+) is bound at residue His67. Residue Glu68 is part of the active site. Position 71 (His71) interacts with Zn(2+).

The protein belongs to the SprT family. Requires Zn(2+) as cofactor.

The protein resides in the cytoplasm. This Lysinibacillus sphaericus (strain C3-41) protein is Protein SprT-like.